A 605-amino-acid polypeptide reads, in one-letter code: Elongation factor 4 (605 aa).

In terms of domain architecture, tr-type G spans 9–192 (HHIRNFCIIA…AIVKRVPAPS (184 aa)). Residues 21–26 (DHGKST) and 139–142 (NKID) contribute to the GTP site.

Belongs to the TRAFAC class translation factor GTPase superfamily. Classic translation factor GTPase family. LepA subfamily.

Its subcellular location is the cell inner membrane. The enzyme catalyses GTP + H2O = GDP + phosphate + H(+). Functionally, required for accurate and efficient protein synthesis under certain stress conditions. May act as a fidelity factor of the translation reaction, by catalyzing a one-codon backward translocation of tRNAs on improperly translocated ribosomes. Back-translocation proceeds from a post-translocation (POST) complex to a pre-translocation (PRE) complex, thus giving elongation factor G a second chance to translocate the tRNAs correctly. Binds to ribosomes in a GTP-dependent manner. In Chlorobium phaeobacteroides (strain DSM 266 / SMG 266 / 2430), this protein is Elongation factor 4.